Here is a 91-residue protein sequence, read N- to C-terminus: Cell division topological specificity factor (91 aa).

It belongs to the MinE family.

Prevents the cell division inhibition by proteins MinC and MinD at internal division sites while permitting inhibition at polar sites. This ensures cell division at the proper site by restricting the formation of a division septum at the midpoint of the long axis of the cell. This Chloroflexus aggregans (strain MD-66 / DSM 9485) protein is Cell division topological specificity factor.